The sequence spans 341 residues: Probable electron transfer flavoprotein subunit alpha, mitochondrial (341 aa).

285 to 313 (LYIAVGIDGAIQHLAGIKDSKVIAAINRD) is an FAD binding site.

The protein belongs to the ETF alpha-subunit/FixB family. As to quaternary structure, heterodimer of an alpha and a beta subunit. FAD is required as a cofactor.

The protein localises to the mitochondrion matrix. Functionally, the electron transfer flavoprotein serves as a specific electron acceptor for several dehydrogenases, including five acyl-CoA dehydrogenases, glutaryl-CoA and sarcosine dehydrogenase. It transfers the electrons to the main mitochondrial respiratory chain via ETF-ubiquinone oxidoreductase (ETF dehydrogenase). This is Probable electron transfer flavoprotein subunit alpha, mitochondrial from Schizosaccharomyces pombe (strain 972 / ATCC 24843) (Fission yeast).